The sequence spans 453 residues: Pentatricopeptide repeat-containing protein At2g38420, mitochondrial (453 aa).

The N-terminal 77 residues, M1–F77, are a transit peptide targeting the mitochondrion. PPR repeat units follow at residues P107 to P141, S142 to L177, E178 to V212, D213 to P249, G250 to P284, D285 to P319, D320 to P354, N355 to R389, and N390 to V424.

Belongs to the PPR family. P subfamily.

The protein localises to the mitochondrion. The polypeptide is Pentatricopeptide repeat-containing protein At2g38420, mitochondrial (Arabidopsis thaliana (Mouse-ear cress)).